The primary structure comprises 384 residues: Anhydro-N-acetylmuramic acid kinase (384 aa).

Gly-12 to Asp-19 lines the ATP pocket.

Belongs to the anhydro-N-acetylmuramic acid kinase family.

It carries out the reaction 1,6-anhydro-N-acetyl-beta-muramate + ATP + H2O = N-acetyl-D-muramate 6-phosphate + ADP + H(+). It functions in the pathway amino-sugar metabolism; 1,6-anhydro-N-acetylmuramate degradation. It participates in cell wall biogenesis; peptidoglycan recycling. Catalyzes the specific phosphorylation of 1,6-anhydro-N-acetylmuramic acid (anhMurNAc) with the simultaneous cleavage of the 1,6-anhydro ring, generating MurNAc-6-P. Is required for the utilization of anhMurNAc either imported from the medium or derived from its own cell wall murein, and thus plays a role in cell wall recycling. In Cronobacter sakazakii (strain ATCC BAA-894) (Enterobacter sakazakii), this protein is Anhydro-N-acetylmuramic acid kinase.